A 341-amino-acid polypeptide reads, in one-letter code: D-erythrose-4-phosphate dehydrogenase (341 aa).

12 to 13 (RI) lines the NAD(+) pocket. Substrate-binding positions include 154 to 156 (SCT), Arg-200, 213 to 214 (TK), and Arg-236. Cys-155 acts as the Nucleophile in catalysis. Asn-318 contributes to the NAD(+) binding site.

The protein belongs to the glyceraldehyde-3-phosphate dehydrogenase family. Epd subfamily. As to quaternary structure, homotetramer.

Its subcellular location is the cytoplasm. The enzyme catalyses D-erythrose 4-phosphate + NAD(+) + H2O = 4-phospho-D-erythronate + NADH + 2 H(+). The protein operates within cofactor biosynthesis; pyridoxine 5'-phosphate biosynthesis; pyridoxine 5'-phosphate from D-erythrose 4-phosphate: step 1/5. Functionally, catalyzes the NAD-dependent conversion of D-erythrose 4-phosphate to 4-phosphoerythronate. This chain is D-erythrose-4-phosphate dehydrogenase, found in Edwardsiella ictaluri (strain 93-146).